Consider the following 100-residue polypeptide: Urease subunit gamma (100 aa).

It belongs to the urease gamma subunit family. Heterotrimer of UreA (gamma), UreB (beta) and UreC (alpha) subunits. Three heterotrimers associate to form the active enzyme.

The protein localises to the cytoplasm. It carries out the reaction urea + 2 H2O + H(+) = hydrogencarbonate + 2 NH4(+). It functions in the pathway nitrogen metabolism; urea degradation; CO(2) and NH(3) from urea (urease route): step 1/1. This chain is Urease subunit gamma, found in Aliivibrio fischeri (strain ATCC 700601 / ES114) (Vibrio fischeri).